The sequence spans 293 residues: 4-diphosphocytidyl-2-C-methyl-D-erythritol kinase (293 aa).

Lys16 is a catalytic residue. An ATP-binding site is contributed by 99–109 (PMGAGLGGGSS). Asp141 is an active-site residue.

It belongs to the GHMP kinase family. IspE subfamily.

The enzyme catalyses 4-CDP-2-C-methyl-D-erythritol + ATP = 4-CDP-2-C-methyl-D-erythritol 2-phosphate + ADP + H(+). Its pathway is isoprenoid biosynthesis; isopentenyl diphosphate biosynthesis via DXP pathway; isopentenyl diphosphate from 1-deoxy-D-xylulose 5-phosphate: step 3/6. Functionally, catalyzes the phosphorylation of the position 2 hydroxy group of 4-diphosphocytidyl-2C-methyl-D-erythritol. This chain is 4-diphosphocytidyl-2-C-methyl-D-erythritol kinase, found in Burkholderia lata (strain ATCC 17760 / DSM 23089 / LMG 22485 / NCIMB 9086 / R18194 / 383).